The following is a 196-amino-acid chain: Large ribosomal subunit protein eL15 (196 aa).

A disordered region spans residues 156 to 196 (HRGRAERGKTSAGRKGRGMRTRGRGTEKTRPSIRSHANQGK). A compositionally biased stretch (basic residues) spans 167-178 (AGRKGRGMRTRG).

It belongs to the eukaryotic ribosomal protein eL15 family.

The chain is Large ribosomal subunit protein eL15 from Methanoregula boonei (strain DSM 21154 / JCM 14090 / 6A8).